Consider the following 327-residue polypeptide: MSQPERDNCSFDSVDKLTRTLQLAVHIPTFLLGLVLNLLAIRGFSAFLKKRKLDYIATSIYMINLAVFDLLLVLSLPFKMVLPQVESPLPSFCTLVECLYFISMYGSVFTICFISLDRFLAIQYPILASHLRSPRKTFGICCIIWMLVWIGSIPIYTFHREVERYKCFHNMSDVTWSASVFFPLEIFGFLLPMGIMGFCSYRSIHILLRRPDSTEDWVQQRDTKGWVQKRACIWTIATNLVIFVVSFLPVHLGFFLQYLVRNRFILDCRMKQGISLFLQLSLCFSNINCCLDVFCYYFVIKEFRMRIKAHRPSTIKLVNQDTMVSRG.

The Extracellular portion of the chain corresponds to M1–T20. An N-linked (GlcNAc...) asparagine glycan is attached at N8. The helical transmembrane segment at L21–I41 threads the bilayer. The Cytoplasmic portion of the chain corresponds to R42 to A57. A helical membrane pass occupies residues T58–F78. The Extracellular segment spans residues K79–C93. The chain crosses the membrane as a helical span at residues T94–I114. Over S115 to K136 the chain is Cytoplasmic. A helical membrane pass occupies residues T137–T157. Topologically, residues F158 to S179 are extracellular. N170 carries an N-linked (GlcNAc...) asparagine glycan. A helical transmembrane segment spans residues V180–S200. Residues Y201–N239 lie on the Cytoplasmic side of the membrane. Residues L240–V260 form a helical membrane-spanning segment. At R261–Q279 the chain is on the extracellular side. Residues L280–I300 form a helical membrane-spanning segment. Residues K301–G327 are Cytoplasmic-facing.

This sequence belongs to the G-protein coupled receptor 1 family. In terms of tissue distribution, highly expressed in splenic plasma cells.

The protein resides in the cell membrane. Its function is as follows. G-protein coupled receptor that binds to several ligands including 2-arachidonoyl lysophosphatidylinositol or lysophosphatidylglucoside with high affinity, leading to rapid and transient activation of numerous intracellular signaling pathways. Induces the Ca(2+) release from intracellular stores via ERK, the heterotrimeric G protein GNA13 and RHOA leading to morphological changes including cell rounding and stress fiber formation. In macrophages, acts downstream of lysophosphatidylglucoside to inhibit the translocation of the phospholipid-transporting ABCA1 to plasma membrane and subsequent cholesterol efflux leading to lipid accumulation and foam cell formation. May be involved in hyperalgesia associated with inflammatory and neuropathic pain. This Mus musculus (Mouse) protein is G-protein coupled receptor 55 (Gpr55).